We begin with the raw amino-acid sequence, 1102 residues long: ATP-dependent DNA helicase MPH1 (1102 aa).

The tract at residues 19–55 (ALDKPATSGLHSREQEQQRDISNATPHTSTDLELEDF) is disordered. A compositionally biased stretch (polar residues) spans 38 to 49 (DISNATPHTSTD). The 169-residue stretch at 147-315 (IVKNGLFNNT…DVIDNLGVSH (169 aa)) folds into the Helicase ATP-binding domain. 160–167 (LPTGLGKT) contributes to the ATP binding site. A DEAH box motif is present at residues 263–266 (DEAH). The region spanning 490–651 (NLLNYFMDAG…GSRFNFRHDL (162 aa)) is the Helicase C-terminal domain. 4 disordered regions span residues 672-702 (PIEN…FNMP), 720-743 (ASKT…DEIS), 818-837 (SQGI…KSRY), and 858-1102 (SGRK…SESG). A compositionally biased stretch (basic residues) spans 687–699 (RSTRGKKASKKKF). Residues 822-837 (ETRHTKPHGDTDKSRY) are compositionally biased toward basic and acidic residues. The segment covering 1003–1019 (SSGAASKSGSTASTAAK) has biased composition (low complexity). Over residues 1069–1082 (SDDDDDDNDDEDDV) the composition is skewed to acidic residues.

Belongs to the DEAD box helicase family. DEAH subfamily. FANCM sub-subfamily. Interacts with the MHF histone-fold complex to form the FANCM-MHF complex.

Its subcellular location is the nucleus. It carries out the reaction ATP + H2O = ADP + phosphate + H(+). ATP-dependent DNA helicase involved in DNA damage repair by homologous recombination and in genome maintenance. Capable of unwinding D-loops. Plays a role in limiting crossover recombinants during mitotic DNA double-strand break (DSB) repair. Component of a FANCM-MHF complex which promotes gene conversion at blocked replication forks, probably by reversal of the stalled fork. This chain is ATP-dependent DNA helicase MPH1, found in Pyricularia oryzae (strain 70-15 / ATCC MYA-4617 / FGSC 8958) (Rice blast fungus).